The chain runs to 1653 residues: Protein TOPAZ1 (1653 aa).

Disordered stretches follow at residues 1-88, 212-238, 553-591, 855-893, and 919-942; these read MPRA…PGID, GCMH…TDPS, KMKS…KKDR, PNVA…GSMK, and EVTH…SSDL. 2 stretches are compositionally biased toward basic and acidic residues: residues 58–69 and 221–236; these read SGREEVESDKSA and SKSK…DKTD. The segment covering 561–585 has biased composition (polar residues); it reads RSASEVVSNTTEDTSLTNMTHNLTG. Composition is skewed to basic and acidic residues over residues 858–877 and 920–942; these read AEEH…KKEP and VTHE…SSDL.

The protein localises to the cytoplasm. It is found in the cytosol. Its function is as follows. Important for normal spermatogenesis and male fertility. Specifically required for progression to the post-meiotic stages of spermatocyte development. Seems to be necessary for normal expression levels of a number of testis-expressed gene transcripts, although its role in this process is unclear. This is Protein TOPAZ1 (TOPAZ1) from Bos taurus (Bovine).